Here is a 513-residue protein sequence, read N- to C-terminus: EGF-like domain-containing protein 1 (513 aa).

An N-terminal signal peptide occupies residues 1 to 21 (MMHTFLRRLCVVALCLGYIKA). The EGF-like domain maps to 72 to 108 (PTALCGPPCLNGGECYEPTVGTYMCMCPEAFYGNKCE). Cystine bridges form between Cys76–Cys86, Cys80–Cys96, and Cys98–Cys107. The 250-residue stretch at 115–364 (ECSGTEITIN…TSCDSVVCPS (250 aa)) folds into the ZP domain. The disordered stretch occupies residues 356–411 (SCDSVVCPSPPQSVPSNPQNIPPANPQNIPPANPQNIPPANPQISPSSSQRKRRAA). The span at 375-396 (NIPPANPQNIPPANPQNIPPAN) shows a compositional bias: pro residues. Residues Asn438 and Asn503 are each glycosylated (N-linked (GlcNAc...) asparagine).

In terms of tissue distribution, component of the acid-insoluble organic matrix of calcified layers of the shell (at protein level).

Its subcellular location is the secreted. This chain is EGF-like domain-containing protein 1, found in Lottia gigantea (Giant owl limpet).